Reading from the N-terminus, the 245-residue chain is 1-(5-phosphoribosyl)-5-[(5-phosphoribosylamino)methylideneamino] imidazole-4-carboxamide isomerase (245 aa).

Residue Asp7 is the Proton acceptor of the active site. Asp129 acts as the Proton donor in catalysis.

Belongs to the HisA/HisF family.

It is found in the cytoplasm. It carries out the reaction 1-(5-phospho-beta-D-ribosyl)-5-[(5-phospho-beta-D-ribosylamino)methylideneamino]imidazole-4-carboxamide = 5-[(5-phospho-1-deoxy-D-ribulos-1-ylimino)methylamino]-1-(5-phospho-beta-D-ribosyl)imidazole-4-carboxamide. The protein operates within amino-acid biosynthesis; L-histidine biosynthesis; L-histidine from 5-phospho-alpha-D-ribose 1-diphosphate: step 4/9. The sequence is that of 1-(5-phosphoribosyl)-5-[(5-phosphoribosylamino)methylideneamino] imidazole-4-carboxamide isomerase from Citrobacter koseri (strain ATCC BAA-895 / CDC 4225-83 / SGSC4696).